The chain runs to 347 residues: MLISQRPTLSEDILTDNRSQFVIEPLEPGFGYTLGNSLRRTLLSSIPGAAVTSIRIDGVLHEFTTVPGVKEDVTEIILNLKGLVVSSEEDEPVTMYLRKQGPGEVTAGDIVPPAGVTLHNPGMRIATLNDKGKIEAELVVERGRGYVPAVQNRALGAEIGRIPVDSIYSPVLKVTYKVDATRVEQRTDFDKLILDVETKSSITPRDALASAGKTLVELFGLARELNVEAEGIEIGPSPAEADHIASFALPIDDLDLTVRSYNCLKREGVHTVGELVSRTESDLLDIRNFGQKSIDEVKVKLHQLGLSLKDSPDSFDPSEVAGYDVTTGTWSTDGAYDSQDYAETEQL.

Residues 1 to 226 (MLISQRPTLS…ELFGLARELN (226 aa)) are alpha N-terminal domain (alpha-NTD). The tract at residues 243 to 347 (HIASFALPID…SQDYAETEQL (105 aa)) is alpha C-terminal domain (alpha-CTD). The segment at 326–347 (TTGTWSTDGAYDSQDYAETEQL) is disordered.

The protein belongs to the RNA polymerase alpha chain family. In terms of assembly, homodimer. The RNAP catalytic core consists of 2 alpha, 1 beta, 1 beta' and 1 omega subunit. When a sigma factor is associated with the core the holoenzyme is formed, which can initiate transcription.

It catalyses the reaction RNA(n) + a ribonucleoside 5'-triphosphate = RNA(n+1) + diphosphate. In terms of biological role, DNA-dependent RNA polymerase catalyzes the transcription of DNA into RNA using the four ribonucleoside triphosphates as substrates. The polypeptide is DNA-directed RNA polymerase subunit alpha (Mycobacterium leprae (strain TN)).